Here is a 501-residue protein sequence, read N- to C-terminus: L-ornithine N(5)-monooxygenase (501 aa).

Residues 1 to 31 are disordered; sequence MESVERKSESSYLGMRNMQPEQRLSLDPPRL. Residues 83–91 and Q102 each bind FAD; that span reads ERQKQFAWH. Residue K107 participates in substrate binding. V168 contacts FAD. NADP(+) is bound by residues 254 to 257 and R279; that span reads SGQS. Substrate is bound by residues 293–296 and N323; that span reads NEIF. 323 to 325 serves as a coordination point for NADP(+); the sequence is NYS. The tract at residues 366–390 is disordered; that stretch reads EHHGPQSRMRIHLKSSKPESEGAAN. Residues 381–390 show a composition bias toward basic and acidic residues; the sequence is SKPESEGAAN. Residue 466 to 468 coordinates FAD; that stretch reads SLL. Substrate is bound at residue S469.

This sequence belongs to the lysine N(6)-hydroxylase/L-ornithine N(5)-oxygenase family. As to quaternary structure, homotetramer. Requires FAD as cofactor.

It carries out the reaction L-ornithine + NADPH + O2 = N(5)-hydroxy-L-ornithine + NADP(+) + H2O. It catalyses the reaction L-ornithine + NADH + O2 = N(5)-hydroxy-L-ornithine + NAD(+) + H2O. Its pathway is siderophore biosynthesis; ferrichrome biosynthesis. Functionally, L-ornithine N(5)-monooxygenase; part of the siderophore biosynthetic pathway. Aspergillus fumigatus produces four types of siderophores, low-molecular-mass iron chelators, including excreted fusarinine C (FsC) and triacetylfusarinine C (TAFC) for iron uptake; and intacellular ferricrocin (FC) for hyphal and hydroxyferricrocin (HFC) for conidial iron distribution and storage. TAFC consists of three N(2)-acetyl-N(5)-anhydromevalonyl-N(5)-hydroxyornithine residues cyclically linked by ester bonds; FC is a cyclic hexapeptide with the structure Gly-Ser-Gly-(N(5)-acetyl-N(5)-hydroxyornithine)x3. The biosynthesis of all four siderophores depends on the hydroxylation of ornithine, catalyzed by the monooxygenase sidA. SidA is highly specific for its substrate, only hydrolyzing l-ornithine, and has preference for NADPH over NADH, NADPH playing a role in stabilization of the C4a-hydroperoxyflavin intermediate. Subsequently, the pathways for biosynthesis of extra- and intracellular siderophores split. For biosynthesis of extracellular siderophores, the transacylase sidF transfers anhydromevalonyl to N(5)-hydroxyornithine. The required anhydromevalonyl-CoA moiety is derived from mevalonate by CoA ligation and dehydration catalyzed by sidI and sidH respectively. The acetylation of N(5)-hydroxyornithine for FC biosynthesis involves the constitutively expressed sidL. FC is hydroxylated to HFC by an as yet uncharacterized enzyme during conidiation. Assembly of fusarinine C (FsC) and FC is catalyzed by two different nonribosomal peptide synthetases (NRPS), sidD and sidC respectively. Subsequently, sidG catalyzes N2-acetylation of FsC for forming TAFC. Both extra- and intracellular siderophores are crucial for growth during iron limitation and virulence. The protein is L-ornithine N(5)-monooxygenase of Aspergillus fumigatus (strain ATCC MYA-4609 / CBS 101355 / FGSC A1100 / Af293) (Neosartorya fumigata).